Consider the following 857-residue polypeptide: MSGRDSRGAGGGGGGHQPLSNAMGKLKEKLTRVGDELGYHRVESNLSTSNTATSLDTILPEDPFLFPQVSPQRHPQNTVRTQRLLEDEPPLSFRPLLEDDDINEPPTQQQQRTPLRASGSLELTPLPPPPTSLEIREHRDRQQRGAQGDDLQRSKQSLKGSRVSFERRDTGNSNTNSNKAAESSDEDSFEEKRTGFQQQKATSVDHKGILKDLKHILANDNRRQFQAKKHVSLDVKGTRFLQDLLKESSSEEEFHKTRREFQGRKHQSLDPRVTFKLDKVLQGSSTDSDEEGEDAEHKRLIHRPKDITKPVIIDLKDLESESDEDFLTSRQHFQQQRSISTDSRKSRRLYEMDEMGNKRGENIRHAVPFVRQITEDGKPKLEVYRPTTNPIYIWTQVLAALSVSLGSLVVGFVSAYTSPALVSMTDRNITSFEVTQDAGSWVGGIMPLAGLAGGIAGGPLIEYLGRRNTILATAVPFIVSSLLIACAVNVAMVLCGRFLAGFCVGIASLSLPVYLGETVQPEVRGTLGLLPTAFGNIGILLCFVAGSFMNWSMLAFLGAALPVPFLILMFLIPETPRWFVGRGLEERARKALKWLRGKEADVEPELKGLMRSQADADRQASRNTMLELFKRINLKPLSISLGLMFFQQFSGINAVIFYTVQIFKDAGSTIDSNLCTIIVGIVNFFATFMGILLIDRLGRKILLYISDIAMILTLSILGGFFYCKAHGPDVSHLGWLPLTCFVIYILGFSLGFGPIPWLMMGEILPAKIRGPAASVVTAFNWFCTFVVTKTFQDLTGAMGAHGAFWLFGAICFVGLFFVIIYVPETQGKTLEDIERKMMGRVRRMSSVANIKPLSFNM.

Disordered stretches follow at residues 1-28 (MSGRDSRGAGGGGGGHQPLSNAMGKLKE) and 62-203 (DPFL…KATS). At 1 to 392 (MSGRDSRGAG…VYRPTTNPIY (392 aa)) the chain is on the cytoplasmic side. Positions 69–81 (VSPQRHPQNTVRT) are enriched in polar residues. Positions 134–143 (EIREHRDRQQ) are enriched in basic and acidic residues. The span at 171-181 (GNSNTNSNKAA) shows a compositional bias: polar residues. Phosphoserine is present on residues Ser248, Ser249, Ser250, Ser320, and Ser322. A disordered region spans residues 327 to 346 (LTSRQHFQQQRSISTDSRKS). Polar residues predominate over residues 330–341 (RQHFQQQRSIST). The chain crosses the membrane as a helical span at residues 393–413 (IWTQVLAALSVSLGSLVVGFV). Over 414-440 (SAYTSPALVSMTDRNITSFEVTQDAGS) the chain is Extracellular. Asn428 carries an N-linked (GlcNAc...) asparagine glycan. Residues 441–461 (WVGGIMPLAGLAGGIAGGPLI) form a helical membrane-spanning segment. At 462–473 (EYLGRRNTILAT) the chain is on the cytoplasmic side. Residues 474 to 494 (AVPFIVSSLLIACAVNVAMVL) form a helical membrane-spanning segment. The Extracellular segment spans residues 495–497 (CGR). A helical transmembrane segment spans residues 498-518 (FLAGFCVGIASLSLPVYLGET). Residues 519–528 (VQPEVRGTLG) are Cytoplasmic-facing. A helical transmembrane segment spans residues 529-549 (LLPTAFGNIGILLCFVAGSFM). The N-linked (GlcNAc...) asparagine glycan is linked to Asn550. Residues 550–552 (NWS) lie on the Extracellular side of the membrane. A helical transmembrane segment spans residues 553-573 (MLAFLGAALPVPFLILMFLIP). Topologically, residues 574 to 636 (ETPRWFVGRG…ELFKRINLKP (63 aa)) are cytoplasmic. The chain crosses the membrane as a helical span at residues 637 to 657 (LSISLGLMFFQQFSGINAVIF). The Extracellular portion of the chain corresponds to 658-673 (YTVQIFKDAGSTIDSN). The chain crosses the membrane as a helical span at residues 674 to 694 (LCTIIVGIVNFFATFMGILLI). The Cytoplasmic segment spans residues 695-700 (DRLGRK). Residues 701-721 (ILLYISDIAMILTLSILGGFF) traverse the membrane as a helical segment. Residues 722–740 (YCKAHGPDVSHLGWLPLTC) lie on the Extracellular side of the membrane. A helical transmembrane segment spans residues 741–761 (FVIYILGFSLGFGPIPWLMMG). The Cytoplasmic portion of the chain corresponds to 762-770 (EILPAKIRG). A helical membrane pass occupies residues 771 to 791 (PAASVVTAFNWFCTFVVTKTF). The Extracellular portion of the chain corresponds to 792 to 801 (QDLTGAMGAH). The helical transmembrane segment at 802 to 822 (GAFWLFGAICFVGLFFVIIYV) threads the bilayer. Topologically, residues 823–857 (PETQGKTLEDIERKMMGRVRRMSSVANIKPLSFNM) are cytoplasmic. Phosphoserine is present on residues Ser845 and Ser846.

It belongs to the major facilitator superfamily. Sugar transporter (TC 2.A.1.1) family. Trehalose transporter subfamily.

The protein localises to the cell membrane. In terms of biological role, low-capacity facilitative transporter for trehalose. Does not transport maltose, sucrose or lactose. Mediates the bidirectional transfer of trehalose. Responsible for the transport of trehalose synthesized in the fat body and the incorporation of trehalose into other tissues that require a carbon source, thereby regulating trehalose levels in the hemolymph. The protein is Facilitated trehalose transporter Tret1-1 of Drosophila simulans (Fruit fly).